The chain runs to 342 residues: Alpha-(1,3)-fucosyltransferase 7 (342 aa).

Topologically, residues 1–11 are cytoplasmic; the sequence is MQNAGLSPTPS. The chain crosses the membrane as a helical; Signal-anchor for type II membrane protein span at residues 12–31; the sequence is LRALGGLAMAALLSTVWLWW. Over 32-342 the chain is Extracellular; the sequence is RLGAAPGGAP…YQDLEGWFQA (311 aa). C68 and C76 are joined by a disulfide. N-linked (GlcNAc...) asparagine glycosylation is present at N81. Residues C211 and C214 are joined by a disulfide bond. N-linked (GlcNAc...) asparagine glycosylation is present at N291. C318 and C321 are disulfide-bonded.

It belongs to the glycosyltransferase 10 family. In terms of processing, N-glycosylated. As to expression, expressed in thymus, spleen, liver and lung. Highly expressed in the thymus and lower expressed in the lung.

The protein localises to the membrane. The enzyme catalyses an N-acetyl-alpha-neuraminyl-(2-&gt;3)-beta-D-galactosyl-(1-&gt;4)-N-acetyl-beta-D-glucosaminyl derivative + GDP-beta-L-fucose = an alpha-Neu5Ac-(2-&gt;3)-beta-D-Gal-(1-&gt;4)-[alpha-L-Fuc-(1-&gt;3)]-beta-D-GlcNAc derivative + GDP + H(+). The catalysed reaction is a neolactoside IV(3)-alpha-NeuAc-nLc4Cer + GDP-beta-L-fucose = a neolactoside IV(3)-alpha-NeuNAc,III(3)-alpha-Fuc-nLc4Cer + GDP + H(+). It catalyses the reaction a neolactoside VI(3)-alpha-NeuNAc-nLc6Cer + GDP-beta-L-fucose = a neolactoside VI(3)-alpha-NeuAc,V(3)-alphaFuc-nLc6Cer + GDP + H(+). It carries out the reaction an alpha-Neu5Ac-(2-&gt;3)-beta-D-Gal-(1-&gt;4)-beta-D-GlcNAc-(1-&gt;3)-beta-D-Gal-(1-&gt;4)-[alpha-L-Fuc-(1-&gt;3)]-beta-D-GlcNAc derivative + GDP-beta-L-fucose = an alpha-Neu5Ac-(2-&gt;3)-beta-D-Gal-(1-&gt;4)-[alpha-L-Fuc-(1-&gt;3)]-beta-D-GlcNAc-(1-&gt;3)-beta-D-Gal-(1-&gt;4)-[alpha-L-Fuc-(1-&gt;3)]-beta-D-GlcNAc derivative + GDP + H(+). The enzyme catalyses an alpha-Neu5Ac-(2-&gt;3)-beta-D-Gal-(1-&gt;4)-beta-D-GlcNAc6S derivative + GDP-beta-L-fucose = an alpha-Neu5Ac-(2-&gt;3)-beta-D-Gal-(1-&gt;4)-[alpha-L-Fuc-(1-&gt;3)]-beta-D-GlcNAc6S derivative + GDP + H(+). The catalysed reaction is alpha-Neu5Ac-(2-&gt;3)-beta-D-Gal-(1-&gt;4)-beta-D-GlcNAc-(1-&gt;3)-beta-D-Gal-(1-&gt;4)-D-Glc + GDP-beta-L-fucose = alpha-Neu5Ac-(2-&gt;3)-beta-D-Gal-(1-&gt;4)-[alpha-L-Fuc-(1-&gt;3)]-beta-D-GlcNAc-(1-&gt;3)-beta-D-Gal-(1-&gt;4)-D-Glc + GDP + H(+). It catalyses the reaction alpha-Neu5Ac-(2-&gt;3)-beta-D-Gal-(1-&gt;4)-beta-D-GlcNAc-(1-&gt;3)-beta-D-Gal-(1-&gt;4)-[alpha-L-Fuc-(1-&gt;3)]-beta-D-GlcNAc-(1-&gt;3)-beta-D-Gal-(1-&gt;4)-beta-D-GlcNAc + GDP-beta-L-fucose = alpha-Neu5Ac-(2-&gt;3)-beta-D-Gal-(1-&gt;4)-[alpha-L-Fuc-(1-&gt;3)]-beta-D-GlcNAc-(1-&gt;3)-beta-D-Gal-(1-&gt;4)-[alpha-L-Fuc-(1-&gt;3)]-beta-D-GlcNAc-(1-&gt;3)-beta-D-Gal-(1-&gt;4)-beta-D-GlcNAc + GDP + H(+). It carries out the reaction alpha-Neu5Ac-(2-&gt;3)-beta-D-Gal-(1-&gt;4)-beta-D-GlcNAc-(1-&gt;3)-beta-D-Gal-(1-&gt;4)-beta-D-GlcNAc-(1-&gt;3)-beta-D-Gal-(1-&gt;4)-beta-D-GlcNAc + GDP-beta-L-fucose = alpha-Neu5Ac-(2-&gt;3)-beta-D-Gal-(1-&gt;4)-[alpha-L-Fuc-(1-&gt;3)]-beta-D-GlcNAc-(1-&gt;3)-beta-D-Gal-(1-&gt;4)-beta-D-GlcNAc-(1-&gt;3)-beta-D-Gal-(1-&gt;4)-beta-D-GlcNAc + GDP + H(+). It participates in protein modification; protein glycosylation. Its activity is regulated as follows. Inhibited by NaCl. Inhibited by GDP in a concentration dependent manner, with an IC(50) value of 93 uM. Also inhibited by GMP and GTP. Inhibited by N-ethylmaleimide. Activated by poly(ethylene glycol) by enhancing the thermal stability of FUT7. Activated by Mn2+, Ca2+, and Mg2+. Both panosialin A and B inhibit activity with IC(50) values of 4.8 and 5.3 ug/ml, respectively. Inhibited by gallic acid (GA) and (-)-epigallocatechin gallate (EGCG) in a time-dependent and irreversible manner with IC(50) values of 60 and 700 nM, respectively. Catalyzes the transfer of L-fucose, from a guanosine diphosphate-beta-L-fucose, to the N-acetyl glucosamine (GlcNAc) of a distal alpha2,3 sialylated lactosamine unit of a glycoprotein or a glycolipid-linked sialopolylactosamines chain through an alpha-1,3 glycosidic linkage and participates in the final fucosylation step in the biosynthesis of the sialyl Lewis X (sLe(x)), a carbohydrate involved in cell and matrix adhesion during leukocyte trafficking and fertilization. In vitro, also synthesizes sialyl-dimeric-Lex structures, from VIM-2 structures and both di-fucosylated and trifucosylated structures from mono-fucosylated precursors. However does not catalyze alpha 1-3 fucosylation when an internal alpha 1-3 fucosylation is present in polylactosamine chain and the fucosylation rate of the internal GlcNAc residues is reduced once fucose has been added to the distal GlcNAc. Also catalyzes the transfer of a fucose from GDP-beta-fucose to the 6-sulfated a(2,3)sialylated substrate to produce 6-sulfo sLex mediating significant L-selectin-dependent cell adhesion. Through sialyl-Lewis(x) biosynthesis, can control SELE- and SELP-mediated cell adhesion with leukocytes and allows leukocytes tethering and rolling along the endothelial tissue thereby enabling the leukocytes to accumulate at a site of inflammation. May enhance embryo implantation through sialyl Lewis X (sLeX)-mediated adhesion of embryo cells to endometrium. May affect insulin signaling by up-regulating the phosphorylation and expression of some signaling molecules involved in the insulin-signaling pathway through SLe(x) which is present on the glycans of the INSRR alpha subunit. The polypeptide is Alpha-(1,3)-fucosyltransferase 7 (Bos taurus (Bovine)).